The sequence spans 346 residues: Porin Omp2a (346 aa).

A signal peptide spans methionine 1 to alanine 22.

This sequence belongs to the alphaproteobacteria porin family. As to quaternary structure, monomer.

The protein resides in the cell outer membrane. Forms passive diffusion pores that allow small molecular weight hydrophilic materials across the outer membrane. This chain is Porin Omp2a (omp2a), found in Brucella ovis.